The following is a 226-amino-acid chain: UPF0173 metal-dependent hydrolase Minf_0129 (226 aa).

Belongs to the UPF0173 family.

This is UPF0173 metal-dependent hydrolase Minf_0129 from Methylacidiphilum infernorum (isolate V4) (Methylokorus infernorum (strain V4)).